The primary structure comprises 193 residues: Cyanate hydratase (193 aa).

Catalysis depends on residues arginine 121, glutamate 124, and serine 147.

The protein belongs to the cyanase family.

It catalyses the reaction cyanate + hydrogencarbonate + 3 H(+) = NH4(+) + 2 CO2. In terms of biological role, catalyzes the reaction of cyanate with bicarbonate to produce ammonia and carbon dioxide. This Phaeodactylum tricornutum (strain CCAP 1055/1) protein is Cyanate hydratase.